The chain runs to 295 residues: Cytidine deaminase (295 aa).

CMP/dCMP-type deaminase domains follow at residues 48 to 168 (EDAD…FGPA) and 187 to 295 (DDDE…YLSL). Residue 89-91 (NME) coordinates substrate. H102 is a Zn(2+) binding site. The Proton donor role is filled by E104. Residues C129 and C132 each coordinate Zn(2+).

Belongs to the cytidine and deoxycytidylate deaminase family. Homodimer. The cofactor is Zn(2+).

The enzyme catalyses cytidine + H2O + H(+) = uridine + NH4(+). It catalyses the reaction 2'-deoxycytidine + H2O + H(+) = 2'-deoxyuridine + NH4(+). Its function is as follows. This enzyme scavenges exogenous and endogenous cytidine and 2'-deoxycytidine for UMP synthesis. In Vibrio cholerae serotype O1 (strain ATCC 39315 / El Tor Inaba N16961), this protein is Cytidine deaminase.